The following is a 401-amino-acid chain: Imidazolonepropionase (401 aa).

Fe(3+) contacts are provided by H66 and H68. The Zn(2+) site is built by H66 and H68. 3 residues coordinate 4-imidazolone-5-propanoate: R75, Y138, and H171. Position 138 (Y138) interacts with N-formimidoyl-L-glutamate. Fe(3+) is bound at residue H236. H236 is a Zn(2+) binding site. Q239 lines the 4-imidazolone-5-propanoate pocket. Position 311 (D311) interacts with Fe(3+). D311 contacts Zn(2+). N313 and G315 together coordinate N-formimidoyl-L-glutamate. A 4-imidazolone-5-propanoate-binding site is contributed by T316.

This sequence belongs to the metallo-dependent hydrolases superfamily. HutI family. Requires Zn(2+) as cofactor. It depends on Fe(3+) as a cofactor.

The protein localises to the cytoplasm. It carries out the reaction 4-imidazolone-5-propanoate + H2O = N-formimidoyl-L-glutamate. It functions in the pathway amino-acid degradation; L-histidine degradation into L-glutamate; N-formimidoyl-L-glutamate from L-histidine: step 3/3. In terms of biological role, catalyzes the hydrolytic cleavage of the carbon-nitrogen bond in imidazolone-5-propanoate to yield N-formimidoyl-L-glutamate. It is the third step in the universal histidine degradation pathway. This is Imidazolonepropionase from Pseudomonas fluorescens (strain Pf0-1).